We begin with the raw amino-acid sequence, 778 residues long: Endonuclease MutS2 (778 aa).

ATP is bound at residue 328 to 335; the sequence is GPNTGGKT. The 76-residue stretch at 702–777 folds into the Smr domain; it reads LDLRGKRYEE…GSGATIVTFK (76 aa).

It belongs to the DNA mismatch repair MutS family. MutS2 subfamily. Homodimer. Binds to stalled ribosomes, contacting rRNA.

In terms of biological role, endonuclease that is involved in the suppression of homologous recombination and thus may have a key role in the control of bacterial genetic diversity. Functionally, acts as a ribosome collision sensor, splitting the ribosome into its 2 subunits. Detects stalled/collided 70S ribosomes which it binds and splits by an ATP-hydrolysis driven conformational change. Acts upstream of the ribosome quality control system (RQC), a ribosome-associated complex that mediates the extraction of incompletely synthesized nascent chains from stalled ribosomes and their subsequent degradation. Probably generates substrates for RQC. The sequence is that of Endonuclease MutS2 from Streptococcus pneumoniae (strain P1031).